A 305-amino-acid chain; its full sequence is Heterogeneous nuclear ribonucleoprotein A0 (305 aa).

Residue M1 is modified to N-acetylmethionine. The RRM 1 domain maps to 7 to 86; that stretch reads CKLFIGGLNV…VELKRAVSRE (80 aa). The residue at position 68 (S68) is a Phosphoserine. A Glycyl lysine isopeptide (Lys-Gly) (interchain with G-Cter in SUMO2) cross-link involves residue K80. S84 bears the Phosphoserine; by MAPKAPK2 mark. Glycyl lysine isopeptide (Lys-Gly) (interchain with G-Cter in SUMO2) cross-links involve residues K96, K98, K99, and K106. The RRM 2 domain maps to 98–175; sequence KKLFVGGLKG…HRVEVKKAVP (78 aa). Position 133 is an N6-acetyllysine (K133). Residue R139 is modified to Omega-N-methylarginine. Residues K154, K159, K172, and K176 each participate in a glycyl lysine isopeptide (Lys-Gly) (interchain with G-Cter in SUMO2) cross-link. Disordered regions lie at residues 174–214 and 262–305; these read VPKE…KGGG and QSSY…GSSF. Composition is skewed to gly residues over residues 181–200 and 269–281; these read SGGGGGGSRSSRGGRGGRGR and KSGGGGGGGGSSW. S188 is subject to Phosphoserine. Position 284 is an omega-N-methylarginine (R284). The span at 290–305 shows a compositional bias: gly residues; sequence YRGGYGGGGGYGGSSF. R291 is subject to Asymmetric dimethylarginine; alternate. The residue at position 291 (R291) is a Dimethylated arginine; alternate. Omega-N-methylarginine; alternate is present on R291.

In terms of processing, phosphorylated at Ser-84 by MAPKAPK2 in response to LPS treatment, promoting stabilization of GADD45A mRNA. Post-translationally, arg-291 is dimethylated, probably to asymmetric dimethylarginine.

The protein localises to the nucleus. Its function is as follows. mRNA-binding component of ribonucleosomes. Specifically binds AU-rich element (ARE)-containing mRNAs. Involved in post-transcriptional regulation of cytokines mRNAs. This is Heterogeneous nuclear ribonucleoprotein A0 (HNRNPA0) from Homo sapiens (Human).